A 349-amino-acid chain; its full sequence is Alanine racemase (349 aa).

Lys-35 serves as the catalytic Proton acceptor; specific for D-alanine. Lys-35 carries the post-translational modification N6-(pyridoxal phosphate)lysine. Residue Arg-130 coordinates substrate. Tyr-244 serves as the catalytic Proton acceptor; specific for L-alanine. Substrate is bound at residue Met-292.

The protein belongs to the alanine racemase family. Pyridoxal 5'-phosphate serves as cofactor.

The catalysed reaction is L-alanine = D-alanine. The protein operates within amino-acid biosynthesis; D-alanine biosynthesis; D-alanine from L-alanine: step 1/1. In terms of biological role, catalyzes the interconversion of L-alanine and D-alanine. May also act on other amino acids. This Cereibacter sphaeroides (strain KD131 / KCTC 12085) (Rhodobacter sphaeroides) protein is Alanine racemase (alr).